The primary structure comprises 299 residues: Elongation factor Ts (299 aa).

Residues 82–85 (TDFV) are involved in Mg(2+) ion dislocation from EF-Tu.

This sequence belongs to the EF-Ts family.

The protein resides in the cytoplasm. Its function is as follows. Associates with the EF-Tu.GDP complex and induces the exchange of GDP to GTP. It remains bound to the aminoacyl-tRNA.EF-Tu.GTP complex up to the GTP hydrolysis stage on the ribosome. The polypeptide is Elongation factor Ts (Dechloromonas aromatica (strain RCB)).